We begin with the raw amino-acid sequence, 301 residues long: MENQINVGIIGAGAMGLLYAANFADKSKLTLFTHRKEQADLLNQKGISLIDNETTKNIHIHAAQITEEEQLTKQQLLIIAVKQYSLNEIIPILQKLPTKIPILFIQNGAGHLERLSELGTTRTILLGISEHGAGREDDTTVIWRGHGRTKYSIFQGELNDDLKELLTSSPAFPIEKHANYQAIIQEKLFINAVINPLTAVLGVQNGKLLENQEWHRLLIRVVNEVETVLPIENALEKVETICRTTALNFSSMALDCMNERMTEIDGIVLPILEKGDKTETSLPTLRTLYQIIKGLEGERHV.

NADP(+)-binding positions include G11–G16, N107, and A133. Residue N107 coordinates substrate. K187 acts as the Proton donor in catalysis. The substrate site is built by N191, N195, N205, and S251. E263 provides a ligand contact to NADP(+).

Belongs to the ketopantoate reductase family.

It is found in the cytoplasm. The catalysed reaction is (R)-pantoate + NADP(+) = 2-dehydropantoate + NADPH + H(+). It functions in the pathway cofactor biosynthesis; (R)-pantothenate biosynthesis; (R)-pantoate from 3-methyl-2-oxobutanoate: step 2/2. In terms of biological role, catalyzes the NADPH-dependent reduction of ketopantoate into pantoic acid. The polypeptide is 2-dehydropantoate 2-reductase (Listeria innocua serovar 6a (strain ATCC BAA-680 / CLIP 11262)).